Reading from the N-terminus, the 696-residue chain is Putative zinc metalloproteinase YIL108W (696 aa).

Residue Lys-245 forms a Glycyl lysine isopeptide (Lys-Gly) (interchain with G-Cter in ubiquitin) linkage. His-318 lines the Zn(2+) pocket. Glu-319 is a catalytic residue. Zn(2+) is bound by residues His-322 and His-328. Phosphoserine is present on Ser-361. Glycyl lysine isopeptide (Lys-Gly) (interchain with G-Cter in ubiquitin) cross-links involve residues Lys-478, Lys-518, Lys-579, Lys-590, and Lys-596. Residues 522 to 695 (GIKSPLYGRS…VDAFGIIYGA (174 aa)) enclose the Jacalin-type lectin domain.

The protein belongs to the peptidase M10B family. Requires Zn(2+) as cofactor.

The protein resides in the cytoplasm. This chain is Putative zinc metalloproteinase YIL108W, found in Saccharomyces cerevisiae (strain ATCC 204508 / S288c) (Baker's yeast).